Consider the following 244-residue polypeptide: Acetylglutamate kinase (244 aa).

Substrate is bound by residues 40-41 (GG), R62, and N155.

Belongs to the acetylglutamate kinase family. ArgB subfamily.

Its subcellular location is the cytoplasm. It catalyses the reaction N-acetyl-L-glutamate + ATP = N-acetyl-L-glutamyl 5-phosphate + ADP. The protein operates within amino-acid biosynthesis; L-arginine biosynthesis; N(2)-acetyl-L-ornithine from L-glutamate: step 2/4. Catalyzes the ATP-dependent phosphorylation of N-acetyl-L-glutamate. This Leuconostoc mesenteroides subsp. mesenteroides (strain ATCC 8293 / DSM 20343 / BCRC 11652 / CCM 1803 / JCM 6124 / NCDO 523 / NBRC 100496 / NCIMB 8023 / NCTC 12954 / NRRL B-1118 / 37Y) protein is Acetylglutamate kinase.